The primary structure comprises 339 residues: Centromere protein N (339 aa).

A phosphoserine mark is found at Ser226, Ser235, and Ser282.

The protein belongs to the CENP-N/CHL4 family. Component of the CENPA-NAC complex, at least composed of CENPA, CENPC, CENPH, CENPM, CENPN, CENPT and CENPU. The CENPA-NAC complex interacts with the CENPA-CAD complex, composed of CENPI, CENPK, CENPL, CENPO, CENPP, CENPQ, CENPR and CENPS. Interacts directly with CENPA. Identified in a centromere complex containing histones H2A, H2B and H4, and at least CENPA, CENPB, CENPC, CENPT, CENPN, HJURP, SUPT16H, SSRP1 and RSF1.

Its subcellular location is the nucleus. The protein localises to the chromosome. It is found in the centromere. It localises to the kinetochore. Its function is as follows. Component of the CENPA-NAC (nucleosome-associated) complex, a complex that plays a central role in assembly of kinetochore proteins, mitotic progression and chromosome segregation. The CENPA-NAC complex recruits the CENPA-CAD (nucleosome distal) complex and may be involved in incorporation of newly synthesized CENPA into centromeres. CENPN is the first protein to bind specifically to CENPA nucleosomes and the direct binding of CENPA nucleosomes by CENPN is required for centromere assembly. Required for chromosome congression and efficiently align the chromosomes on a metaphase plate. The sequence is that of Centromere protein N (CENPN) from Homo sapiens (Human).